The chain runs to 100 residues: Small ubiquitin-related modifier 1 (100 aa).

Residues 1–12 (MSAAGEEDKKPA) are compositionally biased toward basic and acidic residues. The disordered stretch occupies residues 1 to 23 (MSAAGEEDKKPAGGEGGGAHINL). A Ubiquitin-like domain is found at 19 to 96 (AHINLKVKGQ…IDAMLHQTGG (78 aa)). Residue Gly96 forms a Glycyl lysine isopeptide (Gly-Lys) (interchain with K-? in acceptor proteins) linkage.

The protein belongs to the ubiquitin family. SUMO subfamily. In terms of assembly, interacts with SAE2, SCE1 and SIZ1. Covalently attached to a number of proteins.

The protein localises to the nucleus. Its subcellular location is the cytoplasm. Its function is as follows. Ubiquitin-like protein which can be covalently attached to target lysines as a monomer. Does not seem to be involved in protein degradation and may function as an antagonist of ubiquitin in the degradation process. The chain is Small ubiquitin-related modifier 1 (SUMO1) from Oryza sativa subsp. japonica (Rice).